The following is a 401-amino-acid chain: Chromate transport protein (401 aa).

12 consecutive transmembrane segments (helical) span residues 26-46, 67-87, 93-113, 124-144, 172-192, 214-234, 237-257, 272-294, 299-321, 330-350, 356-376, and 379-399; these read LVMYFLRLGTLGFGGPVALAG, GLALAQLAPGPLAAQLAIYLG, IVGATLVGVAFVLPSFLMVLA, LTWMQSVFYGVGAAVIGIIAI, VITESEVAWLFLAAGVLVWFW, AASGMMSTLDWPLLSQIGVFF, AGAFVFGSGLAIVPFLYGGVV, VAVAMITPGPVVITVGFIGYLVA, ACVAAAATFLPCYLFTVLPAPYF, ILAFVDGVTAAAIGAITGAVI, SIVDIPTALLALVTVALLLKF, and LSEPMIVAGAALIGLVAYPLL.

The protein belongs to the chromate ion transporter (CHR) (TC 2.A.51) family.

Its subcellular location is the cell inner membrane. Functionally, this protein reduces chromate accumulation and is essential for chromate resistance. The sequence is that of Chromate transport protein from Cupriavidus metallidurans (strain ATCC 43123 / DSM 2839 / NBRC 102507 / CH34) (Ralstonia metallidurans).